The following is a 298-amino-acid chain: Bifunctional protein FolD (298 aa).

NADP(+) is bound by residues 166 to 168 (GRS), Ser191, and Ile232.

It belongs to the tetrahydrofolate dehydrogenase/cyclohydrolase family. As to quaternary structure, homodimer.

It catalyses the reaction (6R)-5,10-methylene-5,6,7,8-tetrahydrofolate + NADP(+) = (6R)-5,10-methenyltetrahydrofolate + NADPH. The catalysed reaction is (6R)-5,10-methenyltetrahydrofolate + H2O = (6R)-10-formyltetrahydrofolate + H(+). It functions in the pathway one-carbon metabolism; tetrahydrofolate interconversion. In terms of biological role, catalyzes the oxidation of 5,10-methylenetetrahydrofolate to 5,10-methenyltetrahydrofolate and then the hydrolysis of 5,10-methenyltetrahydrofolate to 10-formyltetrahydrofolate. The polypeptide is Bifunctional protein FolD (Maricaulis maris (strain MCS10) (Caulobacter maris)).